The following is an 83-amino-acid chain: Conotoxin VnMKLT1-022 (83 aa).

An N-terminal signal peptide occupies residues 1–22 (MKLMCMMIVAVLFLTAWTFVTA). A propeptide spanning residues 23-55 (DDSINGPENRRIWEKLLSKTRDEMKNPEASKLN) is cleaved from the precursor. Cystine bridges form between Cys59/Cys74, Cys66/Cys78, and Cys73/Cys82.

This sequence belongs to the conotoxin O1 superfamily. In terms of tissue distribution, expressed by the venom duct.

It is found in the secreted. This Conus ventricosus (Mediterranean cone) protein is Conotoxin VnMKLT1-022.